A 115-amino-acid chain; its full sequence is Phosphoribosyl-AMP cyclohydrolase (115 aa).

Asp-80 contributes to the Mg(2+) binding site. Position 81 (Cys-81) interacts with Zn(2+). Residues Asp-82 and Asp-84 each contribute to the Mg(2+) site. Zn(2+) is bound by residues Cys-97 and Cys-104.

This sequence belongs to the PRA-CH family. Homodimer. Mg(2+) serves as cofactor. Zn(2+) is required as a cofactor.

The protein resides in the cytoplasm. The enzyme catalyses 1-(5-phospho-beta-D-ribosyl)-5'-AMP + H2O = 1-(5-phospho-beta-D-ribosyl)-5-[(5-phospho-beta-D-ribosylamino)methylideneamino]imidazole-4-carboxamide. It functions in the pathway amino-acid biosynthesis; L-histidine biosynthesis; L-histidine from 5-phospho-alpha-D-ribose 1-diphosphate: step 3/9. Catalyzes the hydrolysis of the adenine ring of phosphoribosyl-AMP. The chain is Phosphoribosyl-AMP cyclohydrolase from Mycolicibacterium paratuberculosis (strain ATCC BAA-968 / K-10) (Mycobacterium paratuberculosis).